A 129-amino-acid chain; its full sequence is MSNIPSELKYASSHEWVRNEGDGTFTVGITEHAQELLGDMVFVELPEVGDEVDAGEECAVAESVKAASDIYAPIGGEIVAINEELEDAPETVNTDAFGDGWLFRIKASDESELENLLNAEDYANTIDED.

The region spanning threonine 24–lysine 106 is the Lipoyl-binding domain. At lysine 65 the chain carries N6-lipoyllysine.

Belongs to the GcvH family. The glycine cleavage system is composed of four proteins: P, T, L and H. The cofactor is (R)-lipoate.

In terms of biological role, the glycine cleavage system catalyzes the degradation of glycine. The H protein shuttles the methylamine group of glycine from the P protein to the T protein. This chain is Glycine cleavage system H protein, found in Pseudoalteromonas translucida (strain TAC 125).